Reading from the N-terminus, the 262-residue chain is Glucosamine-6-phosphate deaminase (262 aa).

Catalysis depends on Asp-63, which acts as the Proton acceptor; for enolization step. The For ring-opening step role is filled by Asn-129. The active-site Proton acceptor; for ring-opening step is His-131. Glu-136 serves as the catalytic For ring-opening step.

The protein belongs to the glucosamine/galactosamine-6-phosphate isomerase family. NagB subfamily.

The enzyme catalyses alpha-D-glucosamine 6-phosphate + H2O = beta-D-fructose 6-phosphate + NH4(+). Its pathway is amino-sugar metabolism; N-acetylneuraminate degradation; D-fructose 6-phosphate from N-acetylneuraminate: step 5/5. In terms of biological role, catalyzes the reversible isomerization-deamination of glucosamine 6-phosphate (GlcN6P) to form fructose 6-phosphate (Fru6P) and ammonium ion. This is Glucosamine-6-phosphate deaminase from Bacillus cereus (strain ZK / E33L).